A 462-amino-acid polypeptide reads, in one-letter code: Squalene synthase LSS (462 aa).

NADP(+)-binding residues include R48 and R73. Positions 76, 79, and 80 each coordinate Mg(2+). Residues R214, K314, and R316 each coordinate NADP(+). 2 helical membrane passes run 399–419 (LVLV…PLLW) and 436–456 (LGLP…YQVF).

Belongs to the phytoene/squalene synthase family. The cofactor is Mg(2+).

It localises to the membrane. It carries out the reaction 2 (2E,6E)-farnesyl diphosphate + NADH + H(+) = squalene + 2 diphosphate + NAD(+). It catalyses the reaction 2 (2E,6E)-farnesyl diphosphate + NADPH + H(+) = squalene + 2 diphosphate + NADP(+). In terms of biological role, converts farnesyl diphosphate (FPP) into squalene, a precursor for sterol biosynthesis in eukaryotes. This chain is Squalene synthase LSS, found in Botryococcus braunii (Green alga).